The primary structure comprises 540 residues: Cytochrome P450 monooxygenase ORF5 (540 aa).

Residues 48 to 68 form a helical membrane-spanning segment; sequence YHALGTAIALFACACAYALVA. 2 N-linked (GlcNAc...) asparagine glycosylation sites follow: N376 and N460. C483 contributes to the heme binding site.

It belongs to the cytochrome P450 family. Requires heme as cofactor.

The protein resides in the membrane. It functions in the pathway sesquiterpene biosynthesis. Functionally, cytochrome P450 monooxygenase; part of the gene cluster that mediates the biosynthesis of PR-toxin, a bicyclic sesquiterpene belonging to the eremophilane class and acting as a mycotoxin. The first step of the pathway is catalyzed by the aristolochene synthase which performs the cyclization of trans,trans-farnesyl diphosphate (FPP) to the bicyclic sesquiterpene aristolochene. Following the formation of aristolochene, the non-oxygenated aristolochene is converted to the trioxygenated intermediate eremofortin B, via 7-epi-neopetasone. This conversion appears to involve three enzymes, a hydroxysterol oxidase-like enzyme, the quinone-oxidase prx3 that forms the quinone-type-structure in the bicyclic nucleus of aristolochene with the C8-oxo group and the C-3 hydroxyl group, and the P450 monooxygenase ORF6 that introduces the epoxide at the double bond between carbons 1 and 2. No monoxy or dioxy-intermediates have been reported to be released to the broth, so these three early oxidative reactions may be coupled together. Eremofortin B is further oxidized by another P450 monooxygenase, that introduces a second epoxide between carbons 7 and 11 prior to acetylation to eremofortin A by the acetyltransferase ORF8. The second epoxidation may be performed by a second P450 monooxygenase. After the acetylation step, eremofortin A is converted to eremofortin C and then to PR-toxin. First the conversion of eremofortin A to eremofortin C proceeds by oxidation of the side chain of the molecule at C-12 and is catalyzed by the short-chain oxidoreductase prx1. The cytochrome P450 monooxygenase ORF6 is probably also involved in this step. The primary alcohol formed at C-12 is finally oxidized by the short-chain alcohol dehydrogenase prx4 that forms PR-toxin. The sequence is that of Cytochrome P450 monooxygenase ORF5 from Penicillium roqueforti (strain FM164).